A 340-amino-acid chain; its full sequence is Beta-1,3-N-acetylglucosaminyltransferase radical fringe (340 aa).

The Cytoplasmic segment spans residues 1–4; sequence MKIT. Residues 5–25 form a helical; Signal-anchor for type II membrane protein membrane-spanning segment; sequence YVGLIKVCFLVFLLLCATVLL. Residues 26 to 340 lie on the Lumenal side of the membrane; that stretch reads NISWRQRDSS…AFSLAEDPTR (315 aa). N-linked (GlcNAc...) asparagine glycosylation occurs at asparagine 42. Arginine 110 is a binding site for substrate. An N-linked (GlcNAc...) asparagine glycan is attached at asparagine 149. Disulfide bonds link cysteine 150-cysteine 161 and cysteine 179-cysteine 242. Residue aspartate 183 participates in substrate binding. Aspartate 184 contacts Mn(2+). Aspartate 272 is an active-site residue. Position 296 (histidine 296) interacts with Mn(2+).

This sequence belongs to the glycosyltransferase 31 family. Mn(2+) serves as cofactor.

The protein localises to the golgi apparatus membrane. The catalysed reaction is 3-O-(alpha-L-fucosyl)-L-threonyl-[EGF-like domain protein] + UDP-N-acetyl-alpha-D-glucosamine = 3-O-(N-acetyl-beta-D-glucosaminyl-(1-&gt;3)-alpha-L-fucosyl)-L-threonyl-[EGF-like domain protein] + UDP + H(+). It catalyses the reaction 3-O-(alpha-L-fucosyl)-L-seryl-[EGF-like domain protein] + UDP-N-acetyl-alpha-D-glucosamine = 3-O-(N-acetyl-beta-D-glucosaminyl-(1-&gt;3)-alpha-L-fucosyl)-L-seryl-[EGF-like domain protein] + UDP + H(+). Its function is as follows. Glycosyltransferase that initiates the elongation of O-linked fucose residues attached to EGF-like repeats in the extracellular domain of Notch molecules. The chain is Beta-1,3-N-acetylglucosaminyltransferase radical fringe (rfng) from Xenopus laevis (African clawed frog).